A 256-amino-acid polypeptide reads, in one-letter code: Thiazole synthase (256 aa).

K96 acts as the Schiff-base intermediate with DXP in catalysis. 1-deoxy-D-xylulose 5-phosphate contacts are provided by residues G157, 183-184 (AG), and 205-206 (NT).

It belongs to the ThiG family. Homotetramer. Forms heterodimers with either ThiH or ThiS.

The protein localises to the cytoplasm. The catalysed reaction is [ThiS sulfur-carrier protein]-C-terminal-Gly-aminoethanethioate + 2-iminoacetate + 1-deoxy-D-xylulose 5-phosphate = [ThiS sulfur-carrier protein]-C-terminal Gly-Gly + 2-[(2R,5Z)-2-carboxy-4-methylthiazol-5(2H)-ylidene]ethyl phosphate + 2 H2O + H(+). Its pathway is cofactor biosynthesis; thiamine diphosphate biosynthesis. Functionally, catalyzes the rearrangement of 1-deoxy-D-xylulose 5-phosphate (DXP) to produce the thiazole phosphate moiety of thiamine. Sulfur is provided by the thiocarboxylate moiety of the carrier protein ThiS. In vitro, sulfur can be provided by H(2)S. The chain is Thiazole synthase from Bacillus cereus (strain G9842).